A 227-amino-acid chain; its full sequence is Phosphoglycolate phosphatase (227 aa).

Residue Asp13 is the Nucleophile of the active site. Asp13, Asp15, and Asp176 together coordinate Mg(2+).

Belongs to the HAD-like hydrolase superfamily. CbbY/CbbZ/Gph/YieH family. It depends on Mg(2+) as a cofactor.

The catalysed reaction is 2-phosphoglycolate + H2O = glycolate + phosphate. The protein operates within organic acid metabolism; glycolate biosynthesis; glycolate from 2-phosphoglycolate: step 1/1. Its function is as follows. Specifically catalyzes the dephosphorylation of 2-phosphoglycolate. Is involved in the dissimilation of the intracellular 2-phosphoglycolate formed during the DNA repair of 3'-phosphoglycolate ends, a major class of DNA lesions induced by oxidative stress. The sequence is that of Phosphoglycolate phosphatase from Nitrosospira multiformis (strain ATCC 25196 / NCIMB 11849 / C 71).